A 528-amino-acid chain; its full sequence is Bifunctional pantoate ligase/cytidylate kinase (528 aa).

The segment at 1-293 is pantoate--beta-alanine ligase; it reads MRLFTTIAGL…IGSCRLIDNI (293 aa). 34 to 41 provides a ligand contact to ATP; it reads MGALHKGH. The active-site Proton donor is the His41. A (R)-pantoate-binding site is contributed by Gln65. Gln65 contacts beta-alanine. 160–163 lines the ATP pocket; sequence GQKD. (R)-pantoate is bound at residue Gln166. Residues Ile189 and 197–200 each bind ATP; that span reads ISSR. Positions 294–528 are cytidylate kinase; the sequence is LLRNRKPIIA…YGKSSVNNII (235 aa).

This sequence in the N-terminal section; belongs to the pantothenate synthetase family. In the C-terminal section; belongs to the cytidylate kinase family. Type 1 subfamily.

It is found in the cytoplasm. It catalyses the reaction (R)-pantoate + beta-alanine + ATP = (R)-pantothenate + AMP + diphosphate + H(+). The catalysed reaction is CMP + ATP = CDP + ADP. The enzyme catalyses dCMP + ATP = dCDP + ADP. It participates in cofactor biosynthesis; (R)-pantothenate biosynthesis; (R)-pantothenate from (R)-pantoate and beta-alanine: step 1/1. Functionally, catalyzes the condensation of pantoate with beta-alanine in an ATP-dependent reaction via a pantoyl-adenylate intermediate. In terms of biological role, catalyzes the transfer of a phosphate group from ATP to either CMP or dCMP to form CDP or dCDP and ADP, respectively. This is Bifunctional pantoate ligase/cytidylate kinase from Trichodesmium erythraeum (strain IMS101).